The following is a 504-amino-acid chain: Histidine ammonia-lyase (504 aa).

The segment at residues 142 to 144 (ASG) is a cross-link (5-imidazolinone (Ala-Gly)). At Ser-143 the chain carries 2,3-didehydroalanine (Ser).

This sequence belongs to the PAL/histidase family. In terms of processing, contains an active site 4-methylidene-imidazol-5-one (MIO), which is formed autocatalytically by cyclization and dehydration of residues Ala-Ser-Gly.

Its subcellular location is the cytoplasm. It catalyses the reaction L-histidine = trans-urocanate + NH4(+). The protein operates within amino-acid degradation; L-histidine degradation into L-glutamate; N-formimidoyl-L-glutamate from L-histidine: step 1/3. The polypeptide is Histidine ammonia-lyase (Staphylococcus aureus (strain bovine RF122 / ET3-1)).